Reading from the N-terminus, the 102-residue chain is Small ribosomal subunit protein uS10 (102 aa).

The protein belongs to the universal ribosomal protein uS10 family. As to quaternary structure, part of the 30S ribosomal subunit.

Involved in the binding of tRNA to the ribosomes. The polypeptide is Small ribosomal subunit protein uS10 (Methylorubrum populi (strain ATCC BAA-705 / NCIMB 13946 / BJ001) (Methylobacterium populi)).